Consider the following 212-residue polypeptide: Stem bromelain (212 aa).

Intrachain disulfides connect C23/C63 and C57/C96. C26 is an active-site residue. An N-linked (GlcNAc...) asparagine glycan is attached at N117. A disulfide bridge links C152 with C199. H158 is a catalytic residue.

This sequence belongs to the peptidase C1 family.

It carries out the reaction Broad specificity for cleavage of proteins, but strong preference for Z-Arg-Arg-|-NHMec among small molecule substrates.. Functionally, cysteine proteinase with a high level of diversity in substrate specificity. The sequence is that of Stem bromelain from Ananas comosus (Pineapple).